An 83-amino-acid polypeptide reads, in one-letter code: Gene 41 protein (83 aa).

In Mycobacterium phage L5 (Mycobacteriophage L5), this protein is Gene 41 protein (41).